The following is a 231-amino-acid chain: NifU-like protein 1, chloroplastic (231 aa).

Residues 1 to 69 (MMASLATSIS…SSQGEKISPL (69 aa)) constitute a chloroplast transit peptide.

It belongs to the NifU family. As to quaternary structure, homodimer; disulfide-linked. Predominantly expressed in floral stalks and siliques. Expressed in leaves, cauline leaves, flower stalks and flowers (at protein level).

It is found in the plastid. Its subcellular location is the chloroplast stroma. In terms of biological role, molecular scaffold for [Fe-S] cluster assembly of chloroplastic iron-sulfur proteins. This Arabidopsis thaliana (Mouse-ear cress) protein is NifU-like protein 1, chloroplastic (NIFU1).